Reading from the N-terminus, the 316-residue chain is uncharacterized protein (316 aa).

4 BNR repeats span residues 62–73 (FISDSQGLKFSP), 124–135 (KISVDNGLTWSN), 196–207 (FISRDGGLTWRV), and 242–253 (YFSLDQGRTWNQ).

This is an uncharacterized protein from Saccharomyces cerevisiae (strain ATCC 204508 / S288c) (Baker's yeast).